The following is a 261-amino-acid chain: MYTDLKDKVVVVTGGSKGLGRAMAVRFGQEQSKVVVNYRSNEEEALEVKKEIEEAGGQAIIVRGDVTKEEDVVNLVETAVKEFGSLDVMINNAGVENPVPSHELSLENWNQVIDTNLTGAFLGSREAIKYFVENDIKGNVINMSSVHEMIPWPLFVHYAASKGGMKLMTETLALEYAPKGIRVNNIGPGAIDTPINAEKFADPEQRADVESMIPMGYIGKPEEIASVAAFLASSQASYVTGITLFADGGMTKYPSFQAGRG.

11 to 35 lines the NADP(+) pocket; sequence VVTGGSKGLGRAMAVRFGQEQSKVV. A substrate-binding site is contributed by Ser145. Tyr158 serves as the catalytic Proton acceptor.

It belongs to the short-chain dehydrogenases/reductases (SDR) family. In terms of assembly, homotetramer.

It carries out the reaction D-glucose + NAD(+) = D-glucono-1,5-lactone + NADH + H(+). It catalyses the reaction D-glucose + NADP(+) = D-glucono-1,5-lactone + NADPH + H(+). This is Glucose 1-dehydrogenase 2 (gdhII) from Priestia megaterium (Bacillus megaterium).